The sequence spans 98 residues: Large ribosomal subunit protein eL21 (98 aa).

A disordered region spans residues 1–23 (MVDRKGKGFRRKTRDKLSKHPRQ). The span at 7–23 (KGFRRKTRDKLSKHPRQ) shows a compositional bias: basic residues.

Belongs to the eukaryotic ribosomal protein eL21 family.

The sequence is that of Large ribosomal subunit protein eL21 from Nanoarchaeum equitans (strain Kin4-M).